The following is a 39-amino-acid chain: Photosystem II reaction center protein L (39 aa).

Residues 18 to 38 (SLYLGLLLIAVLGILFSSYFF) traverse the membrane as a helical segment.

It belongs to the PsbL family. In terms of assembly, PSII is composed of 1 copy each of membrane proteins PsbA, PsbB, PsbC, PsbD, PsbE, PsbF, PsbH, PsbI, PsbJ, PsbK, PsbL, PsbM, PsbT, PsbX, PsbY, PsbZ, Psb30/Ycf12, peripheral proteins PsbO, CyanoQ (PsbQ), PsbU, PsbV and a large number of cofactors. It forms dimeric complexes.

Its subcellular location is the cellular thylakoid membrane. Functionally, one of the components of the core complex of photosystem II (PSII). PSII is a light-driven water:plastoquinone oxidoreductase that uses light energy to abstract electrons from H(2)O, generating O(2) and a proton gradient subsequently used for ATP formation. It consists of a core antenna complex that captures photons, and an electron transfer chain that converts photonic excitation into a charge separation. This subunit is found at the monomer-monomer interface and is required for correct PSII assembly and/or dimerization. The sequence is that of Photosystem II reaction center protein L from Picosynechococcus sp. (strain ATCC 27264 / PCC 7002 / PR-6) (Agmenellum quadruplicatum).